The chain runs to 295 residues: Malonyl-[acyl-carrier protein] O-methyltransferase (295 aa).

Belongs to the methyltransferase superfamily.

It carries out the reaction malonyl-[ACP] + S-adenosyl-L-methionine = malonyl-[ACP] methyl ester + S-adenosyl-L-homocysteine. Its pathway is cofactor biosynthesis; biotin biosynthesis. Functionally, converts the free carboxyl group of a malonyl-thioester to its methyl ester by transfer of a methyl group from S-adenosyl-L-methionine (SAM). It allows to synthesize pimeloyl-ACP via the fatty acid synthetic pathway. The sequence is that of Malonyl-[acyl-carrier protein] O-methyltransferase from Xylella fastidiosa (strain M23).